We begin with the raw amino-acid sequence, 206 residues long: Small ribosomal subunit protein uS2 (206 aa).

This sequence belongs to the universal ribosomal protein uS2 family.

This is Small ribosomal subunit protein uS2 from Methanothrix thermoacetophila (strain DSM 6194 / JCM 14653 / NBRC 101360 / PT) (Methanosaeta thermophila).